The chain runs to 247 residues: 7-carboxy-7-deazaguanine synthase (247 aa).

Substrate is bound by residues 15–17 (IQG) and arginine 30. Residues 21–247 (LVGRRQIFVR…PQMHRALGLR (227 aa)) form the Radical SAM core domain. [4Fe-4S] cluster contacts are provided by cysteine 34, cysteine 38, and cysteine 41. Threonine 43 contributes to the Mg(2+) binding site. Position 78 (threonine 78) interacts with substrate. Glycine 80 is an S-adenosyl-L-methionine binding site.

This sequence belongs to the radical SAM superfamily. 7-carboxy-7-deazaguanine synthase family. In terms of assembly, homodimer. [4Fe-4S] cluster is required as a cofactor. Requires S-adenosyl-L-methionine as cofactor. It depends on Mg(2+) as a cofactor.

It catalyses the reaction 6-carboxy-5,6,7,8-tetrahydropterin + H(+) = 7-carboxy-7-deazaguanine + NH4(+). The protein operates within purine metabolism; 7-cyano-7-deazaguanine biosynthesis. Its function is as follows. Catalyzes the complex heterocyclic radical-mediated conversion of 6-carboxy-5,6,7,8-tetrahydropterin (CPH4) to 7-carboxy-7-deazaguanine (CDG), a step common to the biosynthetic pathways of all 7-deazapurine-containing compounds. In Methanothermobacter thermautotrophicus (strain ATCC 29096 / DSM 1053 / JCM 10044 / NBRC 100330 / Delta H) (Methanobacterium thermoautotrophicum), this protein is 7-carboxy-7-deazaguanine synthase.